Consider the following 693-residue polypeptide: tRNA (guanine(37)-N(1))-methyltransferase (693 aa).

Residues R327, 365–366 (DI), and 392–393 (DA) contribute to the S-adenosyl-L-methionine site. Residues 497 to 572 (AGDSHQSNSH…QKAEDAPTNE (76 aa)) are disordered. Positions 500-512 (SHQSNSHQSNPHE) are enriched in low complexity. Position 591 (N591) interacts with S-adenosyl-L-methionine.

This sequence belongs to the class I-like SAM-binding methyltransferase superfamily. TRM5/TYW2 family. As to quaternary structure, monomer.

It is found in the mitochondrion matrix. It localises to the nucleus. The protein resides in the cytoplasm. It carries out the reaction guanosine(37) in tRNA + S-adenosyl-L-methionine = N(1)-methylguanosine(37) in tRNA + S-adenosyl-L-homocysteine + H(+). Functionally, specifically methylates the N1 position of guanosine-37 in various cytoplasmic and mitochondrial tRNAs. Methylation is not dependent on the nature of the nucleoside 5' of the target nucleoside. This is the first step in the biosynthesis of wybutosine (yW), a modified base adjacent to the anticodon of tRNAs and required for accurate decoding. The protein is tRNA (guanine(37)-N(1))-methyltransferase of Plasmodium vivax (strain Salvador I).